A 607-amino-acid polypeptide reads, in one-letter code: LRR receptor kinase SERK2 (607 aa).

An N-terminal signal peptide occupies residues 1–21 (MRELRVAVLIIAVSLPSFSAS). Topologically, residues 22 to 219 (DRQGDALYDM…QSGSHSSKIG (198 aa)) are extracellular. 2 N-linked (GlcNAc...) asparagine glycosylation sites follow: Asn36 and Asn110. LRR repeat units lie at residues 87-110 (LKYL…QFGN), 111-135 (LSSL…LGQL), 136-159 (SKLQ…LAKI), and 160-183 (SSLT…LFQV). N-linked (GlcNAc...) asparagine glycans are attached at residues Asn149, Asn171, Asn187, and Asn206. The chain crosses the membrane as a helical span at residues 220 to 240 (IVLGTVGGVIGLLIVAALFLF). Residues 241 to 607 (CKGRRKSHLR…QEAIELSGGR (367 aa)) lie on the Cytoplasmic side of the membrane. One can recognise a Protein kinase domain in the interval 284–563 (FSERNVLGQG…VVRMLEGEGL (280 aa)). Residues 290 to 298 (LGQGGFGKV) and Lys312 contribute to the ATP site. Residue Asp411 is the Proton acceptor of the active site.

Belongs to the protein kinase superfamily. Ser/Thr protein kinase family.

The protein localises to the cell membrane. The catalysed reaction is L-seryl-[protein] + ATP = O-phospho-L-seryl-[protein] + ADP + H(+). It catalyses the reaction L-threonyl-[protein] + ATP = O-phospho-L-threonyl-[protein] + ADP + H(+). May be involved in the regulation of plant growth through the brassinosteroid (BR) signaling pathway. This chain is LRR receptor kinase SERK2, found in Oryza sativa subsp. japonica (Rice).